Here is a 115-residue protein sequence, read N- to C-terminus: Large ribosomal subunit protein bL19 (115 aa).

This sequence belongs to the bacterial ribosomal protein bL19 family.

This protein is located at the 30S-50S ribosomal subunit interface and may play a role in the structure and function of the aminoacyl-tRNA binding site. The chain is Large ribosomal subunit protein bL19 from Streptococcus uberis (strain ATCC BAA-854 / 0140J).